The primary structure comprises 573 residues: LysM domain-containing protein ARB_01155/01156 (573 aa).

The signal sequence occupies residues 1-18 (MIPRNLISGLFLLPFVVA). 3 N-linked (GlcNAc...) asparagine glycosylation sites follow: Asn-46, Asn-71, and Asn-283. Positions 373–419 (RYYEVVAGDQCNTIALHFGITVDAFLSLNTQIDERCSNLWIAYAYCV) constitute a LysM domain. Positions 375–405 (YEVVAGDQCNTIALHFGITVDAFLSLNTQID) are lysM domain.

The protein localises to the secreted. Might have a role in sequestration of chitin oligosaccharides (breakdown products of fungal cell walls that are released during invasion and act as triggers of host immunity) to dampen host defense. In Arthroderma benhamiae (strain ATCC MYA-4681 / CBS 112371) (Trichophyton mentagrophytes), this protein is LysM domain-containing protein ARB_01155/01156.